The sequence spans 114 residues: Iron-sulfur cluster insertion protein ErpA (114 aa).

Residues cysteine 42, cysteine 106, and cysteine 108 each contribute to the iron-sulfur cluster site.

It belongs to the HesB/IscA family. Homodimer. It depends on iron-sulfur cluster as a cofactor.

Required for insertion of 4Fe-4S clusters for at least IspG. This is Iron-sulfur cluster insertion protein ErpA from Citrobacter koseri (strain ATCC BAA-895 / CDC 4225-83 / SGSC4696).